Here is a 366-residue protein sequence, read N- to C-terminus: Mitogen-activated protein kinase CPK1 (366 aa).

A Protein kinase domain is found at 17-302; sequence KLEEIVGEGA…SPSKRITVEE (286 aa). Residues 22–30 and K45 contribute to the ATP site; that span reads VGEGAYGLV. The Proton acceptor role is filled by D140. T181 is modified (phosphothreonine). The TXY motif lies at 181 to 183; the sequence is TEY. Phosphotyrosine is present on Y183.

Belongs to the protein kinase superfamily. CMGC Ser/Thr protein kinase family. MAP kinase subfamily. Mg(2+) is required as a cofactor. Post-translationally, dually phosphorylated on Thr-181 and Tyr-183, which activates the enzyme.

It carries out the reaction L-seryl-[protein] + ATP = O-phospho-L-seryl-[protein] + ADP + H(+). The catalysed reaction is L-threonyl-[protein] + ATP = O-phospho-L-threonyl-[protein] + ADP + H(+). Its activity is regulated as follows. Activated by tyrosine and threonine phosphorylation. In terms of biological role, responds to activation by environmental stress by phosphorylating downstream targets. The protein is Mitogen-activated protein kinase CPK1 (CPK1) of Cryptococcus neoformans var. neoformans serotype D (strain B-3501A) (Filobasidiella neoformans).